The chain runs to 411 residues: ACT domain-containing protein ACR9 (411 aa).

3 ACT domains span residues 22–105 (VVTV…NVSK), 111–194 (LLKF…LAGP), and 243–322 (LLQI…VIIV).

May bind amino acids. The protein is ACT domain-containing protein ACR9 of Arabidopsis thaliana (Mouse-ear cress).